Consider the following 463-residue polypeptide: Methionine aminopeptidase 2-2 (463 aa).

Residues 1-107 are disordered; sequence MGAKTFEGGD…VPLSQLFPDG (107 aa). Over residues 37 to 53 the composition is skewed to acidic residues; sequence EDGDGEFGTDDDDDGDG. Positions 69 to 83 are enriched in basic residues; it reads PKKRKRSKKKKSNKK. His-215 contributes to the substrate binding site. A divalent metal cation-binding residues include Asp-236, Asp-247, and His-316. Residue His-324 coordinates substrate. A divalent metal cation is bound by residues Glu-349 and Glu-444.

This sequence belongs to the peptidase M24A family. Methionine aminopeptidase eukaryotic type 2 subfamily. The cofactor is Co(2+). Zn(2+) is required as a cofactor. Requires Mn(2+) as cofactor. Fe(2+) serves as cofactor.

It localises to the cytoplasm. It catalyses the reaction Release of N-terminal amino acids, preferentially methionine, from peptides and arylamides.. In terms of biological role, cotranslationally removes the N-terminal methionine from nascent proteins. The N-terminal methionine is often cleaved when the second residue in the primary sequence is small and uncharged (Met-Ala-, Cys, Gly, Pro, Ser, Thr, or Val). The chain is Methionine aminopeptidase 2-2 from Talaromyces marneffei (strain ATCC 18224 / CBS 334.59 / QM 7333) (Penicillium marneffei).